A 67-amino-acid polypeptide reads, in one-letter code: Gene 51 protein (67 aa).

The sequence is that of Gene 51 protein (51) from Mycobacterium (Mycobacteriophage L5).